Consider the following 693-residue polypeptide: Exocyst complex component 7 (693 aa).

Ser236 carries the phosphoserine modification. The segment at 236–259 (SWGHEALRPRHSGRQTEPKKTTSA) is disordered.

Belongs to the EXO70 family. As to quaternary structure, the exocyst complex is composed of Sec3/Exoc1, Sec5/Exoc2, Sec6/Exoc3, Sec8/Exoc4, Sec10/Exoc5, Sec15/Exoc6, Exo70/Exoc7 and Exo84/Exoc8.

In terms of biological role, required for exocytosis. Thought to function in intracellular vesicle targeting and docking before SNARE complex formation. The sequence is that of Exocyst complex component 7 from Drosophila melanogaster (Fruit fly).